A 491-amino-acid chain; its full sequence is MTVHFPFQNSYAALPDNFFARVAPTPVAAPRLIKLNRPLAAELGLNPAELETAEGAEILAGKTVPEGAEPIAMAYAGHQFGHFVPQLGDGRAVLLGEVVDKNGVRRDIQLKGSGPTPFSRRGDGRAALGPVLREYIVSEAMAALGIPTTRSLAAVVTGEQVYRGIALPGAVLTRVATSHIRVGTFQYFAARQDVEAVRRLADHVISRHYPDLAGTERPYHALLDAVIARQAKLIADWLLVGFIHGVMNTDNTSVSGETIDYGPCAFMDGYDPKQVFSSIDEFGRYAFANQPRIALWNLTRLAECLLPLFGDDKDQAIKEAEAALDGFAAQFTDAHQAGLRRKLGLFTQVEGDQPLAQALFDAMAAVKADFTLTFRRLSDAAGSGDDAPVRALFEDPTGLDEWLPRWRQRLADEPQTAAERAAAMRQVNPAFIPRNHRIEAVITAAVENDDYAPFEELHAVLARPYDDQPAFSAYAEPPQPDERVLQTFCGT.

Positions 88, 90, 91, 111, 123, 124, 174, and 181 each coordinate ATP. The Proton acceptor role is filled by aspartate 250. Mg(2+)-binding residues include asparagine 251 and aspartate 260. Aspartate 260 lines the ATP pocket.

This sequence belongs to the SELO family. It depends on Mg(2+) as a cofactor. The cofactor is Mn(2+).

It carries out the reaction L-seryl-[protein] + ATP = 3-O-(5'-adenylyl)-L-seryl-[protein] + diphosphate. The catalysed reaction is L-threonyl-[protein] + ATP = 3-O-(5'-adenylyl)-L-threonyl-[protein] + diphosphate. The enzyme catalyses L-tyrosyl-[protein] + ATP = O-(5'-adenylyl)-L-tyrosyl-[protein] + diphosphate. It catalyses the reaction L-histidyl-[protein] + UTP = N(tele)-(5'-uridylyl)-L-histidyl-[protein] + diphosphate. It carries out the reaction L-seryl-[protein] + UTP = O-(5'-uridylyl)-L-seryl-[protein] + diphosphate. The catalysed reaction is L-tyrosyl-[protein] + UTP = O-(5'-uridylyl)-L-tyrosyl-[protein] + diphosphate. Nucleotidyltransferase involved in the post-translational modification of proteins. It can catalyze the addition of adenosine monophosphate (AMP) or uridine monophosphate (UMP) to a protein, resulting in modifications known as AMPylation and UMPylation. This Bradyrhizobium sp. (strain BTAi1 / ATCC BAA-1182) protein is Protein nucleotidyltransferase YdiU.